We begin with the raw amino-acid sequence, 389 residues long: S-adenosylmethionine synthase (389 aa).

H17 lines the ATP pocket. D19 is a Mg(2+) binding site. Position 45 (E45) interacts with K(+). L-methionine-binding residues include E58 and Q101. The flexible loop stretch occupies residues 101–111 (QSPDIAQGVTE). ATP contacts are provided by residues 168–170 (DSK), 234–235 (RF), D243, 249–250 (RK), A266, and K270. D243 lines the L-methionine pocket. K274 contacts L-methionine.

The protein belongs to the AdoMet synthase family. Homotetramer; dimer of dimers. Mg(2+) serves as cofactor. Requires K(+) as cofactor.

Its subcellular location is the cytoplasm. The enzyme catalyses L-methionine + ATP + H2O = S-adenosyl-L-methionine + phosphate + diphosphate. Its pathway is amino-acid biosynthesis; S-adenosyl-L-methionine biosynthesis; S-adenosyl-L-methionine from L-methionine: step 1/1. In terms of biological role, catalyzes the formation of S-adenosylmethionine (AdoMet) from methionine and ATP. The overall synthetic reaction is composed of two sequential steps, AdoMet formation and the subsequent tripolyphosphate hydrolysis which occurs prior to release of AdoMet from the enzyme. This Geobacter sp. (strain M21) protein is S-adenosylmethionine synthase.